Consider the following 712-residue polypeptide: Glycine--tRNA ligase beta subunit (712 aa).

The protein belongs to the class-II aminoacyl-tRNA synthetase family. In terms of assembly, tetramer of two alpha and two beta subunits.

It localises to the cytoplasm. The enzyme catalyses tRNA(Gly) + glycine + ATP = glycyl-tRNA(Gly) + AMP + diphosphate. This is Glycine--tRNA ligase beta subunit from Dechloromonas aromatica (strain RCB).